A 66-amino-acid polypeptide reads, in one-letter code: Large ribosomal subunit protein uL29 (66 aa).

This sequence belongs to the universal ribosomal protein uL29 family.

The sequence is that of Large ribosomal subunit protein uL29 from Helicobacter pylori (strain Shi470).